The following is a 54-amino-acid chain: Ovomucoid (54 aa).

Residues 4–54 form the Kazal-like domain; sequence VDCSEYPKPACTLEYRPLCGSDSKTYGNKCNFCNAVVESNGTLTLSHFGKC. 3 cysteine pairs are disulfide-bonded: cysteine 6–cysteine 36, cysteine 14–cysteine 33, and cysteine 22–cysteine 54. A glycan (N-linked (GlcNAc...) asparagine) is linked at asparagine 43.

Its subcellular location is the secreted. In Alectoris chukar (Chukar partridge), this protein is Ovomucoid.